The following is a 552-amino-acid chain: Gamma-aminobutyric acid receptor subunit alpha-4 (552 aa).

An N-terminal signal peptide occupies residues 1-35 (MVSVQKVPAIALCSGVSLALLHFLCLAACLNESPG). At 36–259 (QNSKDEKLCP…FHLRRKMGYF (224 aa)) the chain is on the extracellular side. N-linked (GlcNAc...) asparagine glycosylation occurs at N47. R100 contacts 4-aminobutanoate. N-linked (GlcNAc...) asparagine glycosylation is found at N144 and N157. T163 is a 4-aminobutanoate binding site. C172 and C186 form a disulfide bridge. A helical transmembrane segment spans residues 260–280 (MIQTYIPCIMTVILSQVSFWI). At 281–284 (NKES) the chain is on the cytoplasmic side. The chain crosses the membrane as a helical span at residues 285–305 (VPARTVFGITTVLTMTTLSIS). Residues 306 to 318 (ARHSLPKVSYATA) are Extracellular-facing. Residues 319–341 (MDWFIAVCFAFVFSALIEFAAVN) form a helical membrane-spanning segment. Over 342–515 (YFTNIQMQKA…PPPSGSGTSK (174 aa)) the chain is Cytoplasmic. 2 disordered regions span residues 353–480 (KKIS…FGSR) and 492–513 (GAAGNVSATPPPPAPPPSGSGT). A compositionally biased stretch (basic and acidic residues) spans 396–406 (SESDVKSRTEV). Residues 407–422 (GNHSSKTSAVQESSEA) show a composition bias toward polar residues. Residues 445 to 458 (SAAARGLSSAASPS) show a composition bias toward low complexity. Residues 500-509 (TPPPPAPPPS) show a composition bias toward pro residues. A helical membrane pass occupies residues 516-538 (IDKYARILFPVTFGAFNMVYWVV). Over 539–552 (YLSKDTMEKSESLM) the chain is Extracellular.

This sequence belongs to the ligand-gated ion channel (TC 1.A.9) family. Gamma-aminobutyric acid receptor (TC 1.A.9.5) subfamily. GABRA4 sub-subfamily. In terms of assembly, heteropentamer, formed by a combination of alpha (GABRA1-6), beta (GABRB1-3), gamma (GABRG1-3), delta (GABRD), epsilon (GABRE), rho (GABRR1-3), pi (GABRP) and theta (GABRQ) chains, each subunit exhibiting distinct physiological and pharmacological properties. As to expression, expressed in the brain.

Its subcellular location is the cell membrane. The protein localises to the postsynaptic cell membrane. The catalysed reaction is chloride(in) = chloride(out). Potentiated by gaboxadol. Potentiated by histamine. Its function is as follows. Alpha subunit of the heteropentameric ligand-gated chloride channel gated by gamma-aminobutyric acid (GABA), a major inhibitory neurotransmitter in the brain. GABA-gated chloride channels, also named GABA(A) receptors (GABAAR), consist of five subunits arranged around a central pore and contain GABA active binding site(s) located at the alpha and beta subunit interface(s). Alpha-4/GABRA4 subunit often assembles with delta or gamma-2 subunits, in combination with beta subunits. When activated by GABA, GABAARs selectively allow the flow of chloride anions across the cell membrane down their electrochemical gradient. GABAARs containing alpha-4 are predominantly extrasynaptic, contributing to tonic inhibition in dentate granule cells and thalamic relay neurons. Extrasynaptic alpha-4-containing GABAARs control levels of excitability and network activity. GABAAR containing alpha-4-beta-3-delta subunits can simultaneously bind GABA and histamine where histamine binds at the interface of two neighboring beta subunits, which may be involved in the regulation of sleep and wakefulness. The sequence is that of Gamma-aminobutyric acid receptor subunit alpha-4 from Mus musculus (Mouse).